A 249-amino-acid polypeptide reads, in one-letter code: Elsinochromes biosynthesis cluster protein HP3 (249 aa).

An N-linked (GlcNAc...) asparagine glycan is attached at N106. A helical membrane pass occupies residues 138–158 (VVFAFMLSAWLVWLITVYAFA).

It is found in the membrane. Its function is as follows. Part of the gene cluster that mediates the biosynthesis of elsinochromes, pigments consisting of at least four interconvertible tautomers (A, B, C and D) that have a core phenolic quinone to which various side chains are attached and which play an important role in fungal pathogenesis. The non-reducing polyketide synthase PKS1 was proposed to iteratively catalyze decarboxylation between acetyl-CoA and malonyl-CoA subunits for polyketide chain elongation. The released polyketide undergoes cyclization to form an aromatic ring, and proceeds via serial modification steps to produce the heptaketide back- bone of elsinochrome. As elsinochrome has a symmetrical structure, two identical heptaketides are fused to form a core 1,2-dihydrobenzo-perylene ring structure, which can then be successively modified to produce the various derivatives of elsinochrome. Some of these reactions may be cooperatively carried out, at least in part, by the products of RDT1, OXR1 and PKS1. PRF1, embedded within the elsinochrome cluster possibly functions to stabilize some of the biosynthetic enzymes required for elsinochrome production. As prefoldin is a hexamer containing 2 a and 4 b subunits, additional prefoldin subunits, whose coding genes may not immediately link to the elsinochrome biosynthetic gene cluster, are required to fulfill the chaperone function. In addition, no methyltransferase-coding gene exists within the biosynthetic gene cluster, even though elsinochrome has four methyl groups at positions C3, C7, C8 and C12. Apparently, the identified gene cluster does not contain the entire entourage of genes responsible for elsinochrome biosynthesis. Once elsinochrome is synthesized, it must be exported outside the fungal cells, which is probably accomplished by the ECT1 transporter, to avoid toxicity. The protein is Elsinochromes biosynthesis cluster protein HP3 of Elsinoe fawcettii (Citrus scab fungus).